Reading from the N-terminus, the 404-residue chain is Zinc finger protein zfs1 (404 aa).

Positions 134–149 (SYLHSGSSPHGNTSNH) are enriched in polar residues. 2 disordered regions span residues 134–168 (SYLH…TGSG) and 259–322 (SNAS…APNG). The segment covering 150–168 (PSPISSLESLPSRSSTGSG) has biased composition (low complexity). A compositionally biased stretch (polar residues) spans 259–283 (SNASIRNAPSNLSKQFSPSGNSPLT). A compositionally biased stretch (low complexity) spans 304-317 (GSASHPHGSGSSNG). C3H1-type zinc fingers lie at residues 326–354 (LYKT…HGNQ) and 364–392 (KYKS…HDES).

Interacts with moc3.

The protein resides in the cytoplasm. It localises to the nucleus. Its function is as follows. Binds to specific AU-rich elements (ARE) in the 3'-untranslated region of target mRNAs and promotes their degradation. Binds to ARE present in the arz1 mRNA and stimulates the rate of arz1 mRNA decay. Required for coordination of septum formation with exit from mitosis. Involved in the mating response pathway. Induces sexual development and ascus formation. This chain is Zinc finger protein zfs1 (zfs1), found in Schizosaccharomyces pombe (strain 972 / ATCC 24843) (Fission yeast).